A 179-amino-acid chain; its full sequence is Large ribosomal subunit protein bL17 (179 aa).

The segment at 127 to 179 (TDTLPDTVIDTGPDSAPDPVPGSEPGSAAGDLPDADTAPADPGESSSNQRVIR) is disordered. A compositionally biased stretch (low complexity) spans 154–168 (AAGDLPDADTAPADP). Residues 170–179 (ESSSNQRVIR) are compositionally biased toward polar residues.

Belongs to the bacterial ribosomal protein bL17 family. In terms of assembly, part of the 50S ribosomal subunit. Contacts protein L32.

This is Large ribosomal subunit protein bL17 from Tropheryma whipplei (strain TW08/27) (Whipple's bacillus).